Consider the following 63-residue polypeptide: Small ribosomal subunit protein bS21 (63 aa).

Belongs to the bacterial ribosomal protein bS21 family.

In Porphyromonas gingivalis (strain ATCC 33277 / DSM 20709 / CIP 103683 / JCM 12257 / NCTC 11834 / 2561), this protein is Small ribosomal subunit protein bS21.